A 77-amino-acid chain; its full sequence is Conotoxin VnMEKL-0223 (77 aa).

Residues 1–19 (MQKLTILLLVAAVLMSTQA) form the signal peptide. Positions 20–37 (LIKGGGEKRPKEKIKFLS) are excised as a propeptide. Disulfide bonds link cysteine 51-cysteine 65, cysteine 58-cysteine 69, and cysteine 64-cysteine 74.

This sequence belongs to the conotoxin O2 superfamily. As to expression, expressed by the venom duct.

It is found in the secreted. The protein is Conotoxin VnMEKL-0223 of Conus ventricosus (Mediterranean cone).